Reading from the N-terminus, the 102-residue chain is A-type ATP synthase subunit F (102 aa).

Belongs to the V-ATPase F subunit family. As to quaternary structure, has multiple subunits with at least A(3), B(3), C, D, E, F, H, I and proteolipid K(x).

It is found in the cell membrane. In terms of biological role, component of the A-type ATP synthase that produces ATP from ADP in the presence of a proton gradient across the membrane. The sequence is that of A-type ATP synthase subunit F from Thermococcus sibiricus (strain DSM 12597 / MM 739).